Consider the following 868-residue polypeptide: Paladin (868 aa).

G2 carries N-myristoyl glycine lipidation.

The protein belongs to the paladin family.

It localises to the cytoplasm. The protein resides in the cytosol. This chain is Paladin (PALD1), found in Gallus gallus (Chicken).